The chain runs to 213 residues: Skin granule protein (213 aa).

The N-terminal stretch at 1-26 (METMYHRFLCIPFLLILGLAQGQSKG) is a signal peptide. 3 tandem repeats follow at residues 27-48 (LQTVTTFRTGLKPIDVTAIRTG), 49-70 (LQPIATFHTGQKPIDVTAIRTG), and 71-92 (LQPIATFHTGLQPVDVTAIRTG). The interval 27–104 (LQTVTTFRTG…PIATFQTGVQ (78 aa)) is 4 X 22 AA approximate tandem repeats. A 4; truncated repeat occupies 93–104 (LQPIATFQTGVQ). The disordered stretch occupies residues 162–213 (WHGGRNGHKMKKLGKKKHHKNRHGGKNHHKMKKIGKHHGGGRKFGKKHRHHK). Residues 166 to 213 (RNGHKMKKLGKKKHHKNRHGGKNHHKMKKIGKHHGGGRKFGKKHRHHK) show a composition bias toward basic residues.

It is found in the secreted. This chain is Skin granule protein (sgp), found in Xenopus laevis (African clawed frog).